Here is a 402-residue protein sequence, read N- to C-terminus: Acyl-[acyl-carrier-protein] desaturase 3, chloroplastic (402 aa).

2 disordered regions span residues 1 to 25 (MSLTGCLPPRPPCSMRRRTSGGGAS) and 38 to 66 (VGGIGNPTPRGKKPFAPWREVPPQVTHTL). The N-terminal 32 residues, 1–32 (MSLTGCLPPRPPCSMRRRTSGGGASVSPVVVM), are a transit peptide targeting the chloroplast. Fe cation is bound by residues Glu-139, Glu-178, His-181, Glu-231, Glu-264, and His-267.

Belongs to the fatty acid desaturase type 2 family. In terms of assembly, homodimer. Fe(2+) is required as a cofactor.

It is found in the plastid. It localises to the chloroplast. Its pathway is lipid metabolism; fatty acid metabolism. Its function is as follows. Introduces a cis double bond in the acyl chain of an acyl-[acyl-carrier protein]. The chain is Acyl-[acyl-carrier-protein] desaturase 3, chloroplastic from Oryza sativa subsp. indica (Rice).